A 102-amino-acid chain; its full sequence is MSDFLSELWLVIKKRIEEKPQGSYTAEIVKRGLPFAARKFGEESVELIVASLSEPRDSVIYEAADVIYHLMVLLALRGVDWAEVIKELERRSRAKSGAGGNS.

Belongs to the PRA-PH family.

It localises to the cytoplasm. It catalyses the reaction 1-(5-phospho-beta-D-ribosyl)-ATP + H2O = 1-(5-phospho-beta-D-ribosyl)-5'-AMP + diphosphate + H(+). It participates in amino-acid biosynthesis; L-histidine biosynthesis; L-histidine from 5-phospho-alpha-D-ribose 1-diphosphate: step 2/9. This is Phosphoribosyl-ATP pyrophosphatase from Ignicoccus hospitalis (strain KIN4/I / DSM 18386 / JCM 14125).